The following is a 391-amino-acid chain: Elongation factor Tu 2 (391 aa).

Positions 10–201 (KPHVNIGTIG…EVDNYIPTPE (192 aa)) constitute a tr-type G domain. Residues 19 to 26 (GHVDHGKT) are G1. Position 19–26 (19–26 (GHVDHGKT)) interacts with GTP. T26 lines the Mg(2+) pocket. Positions 55-59 (GITIS) are G2. Residues 76-79 (DCPG) form a G3 region. GTP contacts are provided by residues 76–80 (DCPGH) and 131–134 (NKVD). Positions 131-134 (NKVD) are G4. Residues 169–171 (SAL) are G5.

Belongs to the TRAFAC class translation factor GTPase superfamily. Classic translation factor GTPase family. EF-Tu/EF-1A subfamily. As to quaternary structure, monomer.

Its subcellular location is the cytoplasm. The catalysed reaction is GTP + H2O = GDP + phosphate + H(+). In terms of biological role, GTP hydrolase that promotes the GTP-dependent binding of aminoacyl-tRNA to the A-site of ribosomes during protein biosynthesis. This is Elongation factor Tu 2 from Bartonella quintana (strain Toulouse) (Rochalimaea quintana).